The following is a 79-amino-acid chain: MELEAMSRYTSPVNPAVFPHLTVVLLAIGMFFTAWFFVYEVTSTKYTRDIYKELLISLVASLFMGFGVLFLLLWVGIYV.

2 helical membrane-spanning segments follow: residues 17-37 and 55-75; these read VFPH…AWFF and LISL…LLWV.

Belongs to the OST5 family. In terms of assembly, component of the oligosaccharyltransferase (OST) complex.

It localises to the membrane. It is found in the endoplasmic reticulum. The protein resides in the cytoplasm. Its pathway is protein modification; protein glycosylation. Its function is as follows. Subunit of the oligosaccharyl transferase (OST) complex that catalyzes the initial transfer of a defined glycan (Glc(3)Man(9)GlcNAc(2) in eukaryotes) from the lipid carrier dolichol-pyrophosphate to an asparagine residue within an Asn-X-Ser/Thr consensus motif in nascent polypeptide chains, the first step in protein N-glycosylation. N-glycosylation occurs cotranslationally and the complex associates with the Sec61 complex at the channel-forming translocon complex that mediates protein translocation across the endoplasmic reticulum (ER). All subunits are required for a maximal enzyme activity. In Gallus gallus (Chicken), this protein is Dolichyl-diphosphooligosaccharide--protein glycosyltransferase subunit TMEM258.